The chain runs to 234 residues: Large ribosomal subunit protein uL1 (234 aa).

It belongs to the universal ribosomal protein uL1 family. In terms of assembly, part of the 50S ribosomal subunit.

Binds directly to 23S rRNA. The L1 stalk is quite mobile in the ribosome, and is involved in E site tRNA release. In terms of biological role, protein L1 is also a translational repressor protein, it controls the translation of the L11 operon by binding to its mRNA. The protein is Large ribosomal subunit protein uL1 of Aliivibrio fischeri (strain ATCC 700601 / ES114) (Vibrio fischeri).